Reading from the N-terminus, the 298-residue chain is Olfactory receptor 5AK3 (298 aa).

Topologically, residues 1 to 25 are extracellular; it reads MGRGNSTEVTEFHLLGFGVQHEFQH. The N-linked (GlcNAc...) asparagine glycan is linked to asparagine 5. A helical membrane pass occupies residues 26–46; that stretch reads VLFIVLLLIYVTSLIGNIGMI. Over 47–54 the chain is Cytoplasmic; sequence LLIKTDSR. The helical transmembrane segment at 55-75 threads the bilayer; that stretch reads LQTPMYFFPQHLAFVDICYTS. The Extracellular segment spans residues 76 to 99; it reads AITPKMLQSFTEENNLITFRGCVI. A disulfide bridge links cysteine 97 with cysteine 189. A helical membrane pass occupies residues 100–120; the sequence is QFLVYATFATSDCYLLAIMAM. The Cytoplasmic segment spans residues 121–133; it reads DCYVAICKPLRYP. A helical transmembrane segment spans residues 134-154; it reads MIMSQTVYIQLVAGSYIIGSI. An N-linked (GlcNAc...) asparagine glycan is attached at asparagine 155. Residues 155–196 are Extracellular-facing; the sequence is NASVHTGFTFSLSFCKSNKINHFFCDGLPILALSCSNIDINI. The chain crosses the membrane as a helical span at residues 197–217; that stretch reads ILDVVFVGFDLMFTELVIIFS. The Cytoplasmic segment spans residues 218 to 237; the sequence is YIYIMVTILKMSSTAGRKKS. A helical membrane pass occupies residues 238-258; sequence FSTCASHLTAVTIFYGTLSYM. Topologically, residues 259 to 271 are extracellular; that stretch reads YLQPQSNNSQENM. An N-linked (GlcNAc...) asparagine glycan is attached at asparagine 265. The helical transmembrane segment at 272–292 threads the bilayer; it reads KVASIFYGTVIPMLNPLIYSL. The Cytoplasmic segment spans residues 293–298; that stretch reads RNKEGK.

The protein belongs to the G-protein coupled receptor 1 family.

The protein localises to the cell membrane. In terms of biological role, odorant receptor. The polypeptide is Olfactory receptor 5AK3 (OR5AK3P) (Homo sapiens (Human)).